The primary structure comprises 244 residues: Transcriptional regulatory protein YpdB (244 aa).

The Response regulatory domain maps to 2 to 116 (KVIIVEDEFL…RITGMLQKLE (115 aa)). Asp-53 bears the 4-aspartylphosphate mark. An HTH LytTR-type domain is found at 139–244 (INLVKDERII…VKEFRQLMHL (106 aa)).

Post-translationally, phosphorylated by YpdA.

Its subcellular location is the cytoplasm. In terms of biological role, member of the two-component regulatory system YpdA/YpdB. YpdB regulates expression of yhjX by binding to its promoter region. The polypeptide is Transcriptional regulatory protein YpdB (ypdB) (Escherichia coli O157:H7).